Reading from the N-terminus, the 469-residue chain is Cysteine--tRNA ligase (469 aa).

Cys28 contacts Zn(2+). The 'HIGH' region motif lies at 30–40 (PTVYNYIHIGN). Zn(2+)-binding residues include Cys213, His238, and Glu242. Positions 270 to 274 (KMSKS) match the 'KMSKS' region motif. Lys273 is an ATP binding site.

The protein belongs to the class-I aminoacyl-tRNA synthetase family. As to quaternary structure, monomer. Zn(2+) is required as a cofactor.

It localises to the cytoplasm. It carries out the reaction tRNA(Cys) + L-cysteine + ATP = L-cysteinyl-tRNA(Cys) + AMP + diphosphate. The chain is Cysteine--tRNA ligase from Leuconostoc citreum (strain KM20).